Here is a 245-residue protein sequence, read N- to C-terminus: 2,3,4,5-tetrahydropyridine-2,6-dicarboxylate N-acetyltransferase (245 aa).

This sequence belongs to the transferase hexapeptide repeat family. DapH subfamily.

It carries out the reaction (S)-2,3,4,5-tetrahydrodipicolinate + acetyl-CoA + H2O = L-2-acetamido-6-oxoheptanedioate + CoA. It functions in the pathway amino-acid biosynthesis; L-lysine biosynthesis via DAP pathway; LL-2,6-diaminopimelate from (S)-tetrahydrodipicolinate (acetylase route): step 1/3. Functionally, catalyzes the transfer of an acetyl group from acetyl-CoA to tetrahydrodipicolinate. This is 2,3,4,5-tetrahydropyridine-2,6-dicarboxylate N-acetyltransferase from Methanopyrus kandleri (strain AV19 / DSM 6324 / JCM 9639 / NBRC 100938).